Consider the following 419-residue polypeptide: Maltoporin 2 (419 aa).

Residues 1–23 (MKTSLRTLSVALAAALVSPSVLA) form the signal peptide.

Belongs to the porin LamB (TC 1.B.3) family. In terms of assembly, homotrimer formed of three 18-stranded antiparallel beta-barrels, containing three independent channels.

The protein localises to the cell outer membrane. It catalyses the reaction beta-maltose(in) = beta-maltose(out). Involved in the transport of maltose and maltodextrins. This chain is Maltoporin 2, found in Yersinia pestis bv. Antiqua (strain Antiqua).